Here is a 91-residue protein sequence, read N- to C-terminus: Cell division topological specificity factor (91 aa).

This sequence belongs to the MinE family.

Functionally, prevents the cell division inhibition by proteins MinC and MinD at internal division sites while permitting inhibition at polar sites. This ensures cell division at the proper site by restricting the formation of a division septum at the midpoint of the long axis of the cell. The polypeptide is Cell division topological specificity factor (Bradyrhizobium diazoefficiens (strain JCM 10833 / BCRC 13528 / IAM 13628 / NBRC 14792 / USDA 110)).